Reading from the N-terminus, the 299-residue chain is MTDNTRLRIAMQKSGRLSDDSRELLARCGIKINLHTQRLIAMAENMPIDILRVRDDDIPGLVMDGVVDLGIIGENVLEEELLNRRAQGEDPRYFTLRRLDFGGCRLSLATPVDDAWDGPLSLNGKRIATSYPHLLKRYLDQKGISFKSCLLNGSVEVAPRAGLADAICDLVSTGATLEANGLREVEVIYRSKACLIQRDGEMEESKQQLIDKLLTRIQGVIQARESKYIMMHAPTQRLDEVIALLPGAERPTILPLAGDQQRVAMHMVSSETLFWETMEKLKALGASSILVLPIEKMME.

This sequence belongs to the ATP phosphoribosyltransferase family. Long subfamily. As to quaternary structure, equilibrium between an active dimeric form, an inactive hexameric form and higher aggregates. Interconversion between the various forms is largely reversible and is influenced by the natural substrates and inhibitors of the enzyme. The cofactor is Mg(2+).

It is found in the cytoplasm. The catalysed reaction is 1-(5-phospho-beta-D-ribosyl)-ATP + diphosphate = 5-phospho-alpha-D-ribose 1-diphosphate + ATP. It functions in the pathway amino-acid biosynthesis; L-histidine biosynthesis; L-histidine from 5-phospho-alpha-D-ribose 1-diphosphate: step 1/9. Feedback inhibited by histidine. Its function is as follows. Catalyzes the condensation of ATP and 5-phosphoribose 1-diphosphate to form N'-(5'-phosphoribosyl)-ATP (PR-ATP). Has a crucial role in the pathway because the rate of histidine biosynthesis seems to be controlled primarily by regulation of HisG enzymatic activity. The chain is ATP phosphoribosyltransferase from Escherichia coli O157:H7.